Reading from the N-terminus, the 104-residue chain is Large ribosomal subunit protein uL24 (104 aa).

The protein belongs to the universal ribosomal protein uL24 family. In terms of assembly, part of the 50S ribosomal subunit.

One of two assembly initiator proteins, it binds directly to the 5'-end of the 23S rRNA, where it nucleates assembly of the 50S subunit. In terms of biological role, one of the proteins that surrounds the polypeptide exit tunnel on the outside of the subunit. In Clostridium perfringens (strain ATCC 13124 / DSM 756 / JCM 1290 / NCIMB 6125 / NCTC 8237 / Type A), this protein is Large ribosomal subunit protein uL24.